The following is a 142-amino-acid chain: Hemoglobin subunit alpha-2 (142 aa).

A Globin domain is found at 2–142 (LLSADDKKHI…VSTVLTSKYR (141 aa)). Histidine 59 is a binding site for O2. Residue histidine 88 participates in heme b binding.

It belongs to the globin family. As to quaternary structure, heterotetramer of two alpha chains and two beta chains. In terms of tissue distribution, red blood cells.

In terms of biological role, involved in oxygen transport from the lung to the various peripheral tissues. The polypeptide is Hemoglobin subunit alpha-2 (hba2) (Xenopus laevis (African clawed frog)).